Consider the following 416-residue polypeptide: UDP-N-acetylglucosamine 1-carboxyvinyltransferase (416 aa).

22-23 (KN) contributes to the phosphoenolpyruvate binding site. A UDP-N-acetyl-alpha-D-glucosamine-binding site is contributed by R91. C115 serves as the catalytic Proton donor. C115 carries the post-translational modification 2-(S-cysteinyl)pyruvic acid O-phosphothioketal. UDP-N-acetyl-alpha-D-glucosamine is bound by residues 120 to 124 (RPIDL), D305, and I327.

This sequence belongs to the EPSP synthase family. MurA subfamily.

The protein localises to the cytoplasm. The enzyme catalyses phosphoenolpyruvate + UDP-N-acetyl-alpha-D-glucosamine = UDP-N-acetyl-3-O-(1-carboxyvinyl)-alpha-D-glucosamine + phosphate. Its pathway is cell wall biogenesis; peptidoglycan biosynthesis. Its function is as follows. Cell wall formation. Adds enolpyruvyl to UDP-N-acetylglucosamine. In Buchnera aphidicola subsp. Acyrthosiphon pisum (strain 5A), this protein is UDP-N-acetylglucosamine 1-carboxyvinyltransferase.